The sequence spans 180 residues: PRA1 family protein F1 (180 aa).

The next 4 helical transmembrane spans lie at A63–S83, L84–L104, I123–L143, and I145–T165.

It belongs to the PRA1 family. In terms of assembly, interacts with PRA1F2. In terms of tissue distribution, expressed in hypocotyls, leaf bases and shoot apex.

The protein localises to the endosome membrane. Its function is as follows. May be involved in both secretory and endocytic intracellular trafficking in the endosomal/prevacuolar compartments. This chain is PRA1 family protein F1 (PRA1F1), found in Arabidopsis thaliana (Mouse-ear cress).